A 440-amino-acid polypeptide reads, in one-letter code: MIPKKTKLKSREIEVPGDKSLSHRSVLFAALSKGKSKVTGFLEAEDPLNTMSAFAKLGLKVQKVKPGEYEFESPGKNKLVSPNVDLDFGNAGTGIRLSAGLICGLPGINATLTGDNSLKKRPMGRIIKPLSSMGASIVGLGEKETAPLKIEGKKLKGFRYESPIASAQVKSCLMLAAISSETDLEYSENILSRDHTENMFRFLGNKIEQISPLHFKIKPPYVLNGGEFRVPGDISSAAFFLVLGVLAKEGNLLIKNIGLNPARTGILTALQSMGAKIEIQNKRIECGEPVGDLKTYPSNLKKSNIPESLIPSIIDEIPILSVAGFFAEGGFEIRHAEELRAKESDRIHTMVSNFRELGIEVEEYTDGYSFDGTSKKSSEVWTRLSTVKKIPIQSYMDHRIAMSFLIFKTLSGLDLQIDETSWIETSFPGFEKLLESCINE.

3-phosphoshikimate-binding residues include Lys19, Ser20, and Arg24. Lys19 contacts phosphoenolpyruvate. Phosphoenolpyruvate contacts are provided by Gly92 and Arg121. The 3-phosphoshikimate site is built by Ser166, Gln168, Asp315, and Lys342. Residue Gln168 participates in phosphoenolpyruvate binding. Asp315 functions as the Proton acceptor in the catalytic mechanism. Phosphoenolpyruvate is bound by residues Arg346 and Arg399.

This sequence belongs to the EPSP synthase family. In terms of assembly, monomer.

It is found in the cytoplasm. It catalyses the reaction 3-phosphoshikimate + phosphoenolpyruvate = 5-O-(1-carboxyvinyl)-3-phosphoshikimate + phosphate. It functions in the pathway metabolic intermediate biosynthesis; chorismate biosynthesis; chorismate from D-erythrose 4-phosphate and phosphoenolpyruvate: step 6/7. Functionally, catalyzes the transfer of the enolpyruvyl moiety of phosphoenolpyruvate (PEP) to the 5-hydroxyl of shikimate-3-phosphate (S3P) to produce enolpyruvyl shikimate-3-phosphate and inorganic phosphate. The polypeptide is 3-phosphoshikimate 1-carboxyvinyltransferase (Leptospira interrogans serogroup Icterohaemorrhagiae serovar copenhageni (strain Fiocruz L1-130)).